The chain runs to 264 residues: Glucosamine-6-phosphate deaminase (264 aa).

D72 (proton acceptor; for enolization step) is an active-site residue. Residue D141 is the For ring-opening step of the active site. H143 functions as the Proton acceptor; for ring-opening step in the catalytic mechanism. E148 acts as the For ring-opening step in catalysis.

This sequence belongs to the glucosamine/galactosamine-6-phosphate isomerase family. NagB subfamily. In terms of assembly, homohexamer.

It carries out the reaction alpha-D-glucosamine 6-phosphate + H2O = beta-D-fructose 6-phosphate + NH4(+). Its pathway is amino-sugar metabolism; N-acetylneuraminate degradation; D-fructose 6-phosphate from N-acetylneuraminate: step 5/5. Allosterically activated by N-acetylglucosamine 6-phosphate (GlcNAc6P). Its function is as follows. Catalyzes the reversible isomerization-deamination of glucosamine 6-phosphate (GlcN6P) to form fructose 6-phosphate (Fru6P) and ammonium ion. The sequence is that of Glucosamine-6-phosphate deaminase from Glaesserella parasuis serovar 5 (strain SH0165) (Haemophilus parasuis).